The chain runs to 446 residues: Probable ribosomal RNA small subunit methyltransferase B (446 aa).

S-adenosyl-L-methionine is bound by residues 260–266 (CAAPGGK), aspartate 284, aspartate 311, and aspartate 330. Residue cysteine 383 is the Nucleophile of the active site.

It belongs to the class I-like SAM-binding methyltransferase superfamily. RsmB/NOP family.

It is found in the cytoplasm. It catalyses the reaction cytidine(967) in 16S rRNA + S-adenosyl-L-methionine = 5-methylcytidine(967) in 16S rRNA + S-adenosyl-L-homocysteine + H(+). Functionally, specifically methylates the cytosine at position 967 (m5C967) of 16S rRNA. In Synechocystis sp. (strain ATCC 27184 / PCC 6803 / Kazusa), this protein is Probable ribosomal RNA small subunit methyltransferase B.